A 416-amino-acid polypeptide reads, in one-letter code: tRNA(Met) cytidine acetate ligase (416 aa).

ATP contacts are provided by residues 7-20 (VVEYNPFHNGHLYH), glycine 101, asparagine 163, and arginine 188.

The protein belongs to the TmcAL family.

It is found in the cytoplasm. The catalysed reaction is cytidine(34) in elongator tRNA(Met) + acetate + ATP = N(4)-acetylcytidine(34) in elongator tRNA(Met) + AMP + diphosphate. Its function is as follows. Catalyzes the formation of N(4)-acetylcytidine (ac(4)C) at the wobble position of elongator tRNA(Met), using acetate and ATP as substrates. First activates an acetate ion to form acetyladenylate (Ac-AMP) and then transfers the acetyl group to tRNA to form ac(4)C34. This chain is tRNA(Met) cytidine acetate ligase, found in Bacillus licheniformis (strain ATCC 14580 / DSM 13 / JCM 2505 / CCUG 7422 / NBRC 12200 / NCIMB 9375 / NCTC 10341 / NRRL NRS-1264 / Gibson 46).